Reading from the N-terminus, the 271-residue chain is N-acetylaspartate synthetase (271 aa).

The tract at residues 1–38 (MTYRGTRKSPCCSPPPRCGPPLPSGPAGSALGPPSSGA) is disordered. Positions 12-24 (CSPPPRCGPPLPS) are enriched in pro residues. A compositionally biased stretch (low complexity) spans 25 to 37 (GPAGSALGPPSSG). Residues 89-109 (VYAVIIIMCFVVTKSLLVTCC) traverse the membrane as a helical segment. Positions 115 to 258 (LGMRYYYSRK…HSLLERLFFQ (144 aa)) constitute an N-acetyltransferase domain.

It belongs to the NAT8 family.

The protein resides in the cytoplasm. It is found in the microsome membrane. Its subcellular location is the mitochondrion membrane. The protein localises to the endoplasmic reticulum membrane. It catalyses the reaction L-aspartate + acetyl-CoA = N-acetyl-L-aspartate + CoA + H(+). Catalyzes the synthesis of N-acetylaspartate acid (NAA) from L-aspartate and acetyl-CoA. In Xenopus tropicalis (Western clawed frog), this protein is N-acetylaspartate synthetase (nat8l).